Reading from the N-terminus, the 179-residue chain is Interleukin-22 (179 aa).

Residues 1–33 (MAVLQKSMSFSLMGTLAASCLLLIALWAQEANA) form the signal peptide. 2 disulfides stabilise this stretch: Cys40–Cys132 and Cys89–Cys178. Residues Asn54, Asn68, and Asn97 are each glycosylated (N-linked (GlcNAc...) asparagine).

The protein belongs to the IL-10 family.

It localises to the secreted. Its function is as follows. Cytokine that plays a critical role in modulating tissue responses during inflammation. Plays an essential role in the regeneration of epithelial cells to maintain barrier function after injury and for the prevention of further tissue damage. Unlike most of the cytokines, has no effect on immune cells. Signals through a heterodimeric receptor composed of two subunits, the specific receptor IL22RA1 which is present on non-immune cells in many organs and the shared subunit IL10RB. Ligation of IL22RA1 with IL22 induces activation of the tyrosine kinases JAK1 and TYK2, which in turn activates STAT3. In turn, promotes cell survival and proliferation through STAT3, ERK1/2 and PI3K/AKT pathways. Promotes phosphorylation of GSK3B at 'Ser-9' and CTTN. Promotes epithelial cell spreading. This is Interleukin-22 (Il22) from Mus musculus (Mouse).